Consider the following 213-residue polypeptide: PRA1 family protein B2 (213 aa).

The tract at residues 1–21 (MSSSPAILPVTNQQAATQSQP) is disordered. 5 helical membrane-spanning segments follow: residues 75 to 94 (LAYF…AFSL), 98 to 117 (PFSL…LYLF), 137 to 157 (LLGL…GSLL), 161 to 181 (LTIG…DDLF), and 190 to 210 (AGLL…SVVA).

The protein belongs to the PRA1 family. Interacts with PRA1B1, PRA1B3, PRA1B4, PRA1B5, PRA1B6 and PRA1E.

The protein resides in the endosome membrane. Functionally, may be involved in both secretory and endocytic intracellular trafficking in the endosomal/prevacuolar compartments. The sequence is that of PRA1 family protein B2 (PRA1B2) from Arabidopsis thaliana (Mouse-ear cress).